Reading from the N-terminus, the 195-residue chain is Imidazoleglycerol-phosphate dehydratase (195 aa).

This sequence belongs to the imidazoleglycerol-phosphate dehydratase family.

The protein localises to the cytoplasm. The catalysed reaction is D-erythro-1-(imidazol-4-yl)glycerol 3-phosphate = 3-(imidazol-4-yl)-2-oxopropyl phosphate + H2O. Its pathway is amino-acid biosynthesis; L-histidine biosynthesis; L-histidine from 5-phospho-alpha-D-ribose 1-diphosphate: step 6/9. This Ruegeria pomeroyi (strain ATCC 700808 / DSM 15171 / DSS-3) (Silicibacter pomeroyi) protein is Imidazoleglycerol-phosphate dehydratase.